The following is a 386-amino-acid chain: Lipid-A-disaccharide synthase (386 aa).

This sequence belongs to the LpxB family.

It catalyses the reaction a lipid X + a UDP-2-N,3-O-bis[(3R)-3-hydroxyacyl]-alpha-D-glucosamine = a lipid A disaccharide + UDP + H(+). The protein operates within bacterial outer membrane biogenesis; LPS lipid A biosynthesis. Condensation of UDP-2,3-diacylglucosamine and 2,3-diacylglucosamine-1-phosphate to form lipid A disaccharide, a precursor of lipid A, a phosphorylated glycolipid that anchors the lipopolysaccharide to the outer membrane of the cell. The protein is Lipid-A-disaccharide synthase of Chromohalobacter salexigens (strain ATCC BAA-138 / DSM 3043 / CIP 106854 / NCIMB 13768 / 1H11).